We begin with the raw amino-acid sequence, 297 residues long: Vesicular-fusion protein SEC17 (297 aa).

It belongs to the SNAP family.

It is found in the membrane. Required for vesicular transport between the endoplasmic reticulum and the Golgi apparatus. The sequence is that of Vesicular-fusion protein SEC17 (SEC17) from Komagataella phaffii (strain GS115 / ATCC 20864) (Yeast).